The primary structure comprises 341 residues: tRNA N6-adenosine threonylcarbamoyltransferase (341 aa).

His111 and His115 together coordinate Fe cation. Residues 134–138 (LVSGG), Asp167, Gly180, and Asn276 each bind substrate. Asp304 serves as a coordination point for Fe cation.

This sequence belongs to the KAE1 / TsaD family. The cofactor is Fe(2+).

The protein localises to the cytoplasm. It catalyses the reaction L-threonylcarbamoyladenylate + adenosine(37) in tRNA = N(6)-L-threonylcarbamoyladenosine(37) in tRNA + AMP + H(+). Functionally, required for the formation of a threonylcarbamoyl group on adenosine at position 37 (t(6)A37) in tRNAs that read codons beginning with adenine. Is involved in the transfer of the threonylcarbamoyl moiety of threonylcarbamoyl-AMP (TC-AMP) to the N6 group of A37, together with TsaE and TsaB. TsaD likely plays a direct catalytic role in this reaction. The sequence is that of tRNA N6-adenosine threonylcarbamoyltransferase from Pseudomonas putida (strain W619).